The primary structure comprises 456 residues: MQHLLKSLPKVDTLLAHNELKMFQKSTLLPLIQSHLSLLRENICSNTLSPKELESALNEIIPVIKKKAIEATKPTLTRVINATGVVIHTNLGRSVLSPQILDEITPFLRSYHTLEYDLAKGKRSERYTHTKQILCEMFGCEDALLVNNNAAAVLLILNTFAAHKEVIISRGELVEIGGSFRIPEVMKSASSILCEVGATNKTHLKDYENAINEQSAMIMKVHQSNFKQIGFVKQCHIKEIIHLAQKHHLIDYFDLGSGHIGALPLADEPSVREICKYKPSLLSFSGDKLLGGPQVGIIIGKSQLIAQLKHNQLLRALRVDKFSILALQATLKAYQNKEYHKIPTLAMLAFTPKELESKAKNLKKRILASSIASELEVEVIPLHSLAGGGSVPHLSFDSFGISLQAKHLQVQDFEFALRALGLISCIQGEKILLDVRTLLEGDEERIMEILGEVLSS.

Residue Lys-288 is modified to N6-(pyridoxal phosphate)lysine.

It belongs to the SelA family. The cofactor is pyridoxal 5'-phosphate.

The protein localises to the cytoplasm. The enzyme catalyses L-seryl-tRNA(Sec) + selenophosphate + H(+) = L-selenocysteinyl-tRNA(Sec) + phosphate. Its pathway is aminoacyl-tRNA biosynthesis; selenocysteinyl-tRNA(Sec) biosynthesis; selenocysteinyl-tRNA(Sec) from L-seryl-tRNA(Sec) (bacterial route): step 1/1. In terms of biological role, converts seryl-tRNA(Sec) to selenocysteinyl-tRNA(Sec) required for selenoprotein biosynthesis. The polypeptide is L-seryl-tRNA(Sec) selenium transferase (Helicobacter hepaticus (strain ATCC 51449 / 3B1)).